A 76-amino-acid chain; its full sequence is Esculentin-2MT1 (76 aa).

Residues 1–22 (MFTMKKPLLLLFFLGTISLSLC) form the signal peptide. The propeptide occupies 23 to 37 (EEERNADEDDGEKEV). The cysteines at positions 70 and 76 are disulfide-linked.

It belongs to the frog skin active peptide (FSAP) family. Esculentin subfamily. In terms of tissue distribution, expressed by the skin glands.

The protein localises to the secreted. In terms of biological role, antimicrobial peptide. This chain is Esculentin-2MT1, found in Amolops mantzorum (Sichuan torrent frog).